Reading from the N-terminus, the 567-residue chain is Proline--tRNA ligase (567 aa).

Belongs to the class-II aminoacyl-tRNA synthetase family. ProS type 1 subfamily. In terms of assembly, homodimer.

Its subcellular location is the cytoplasm. It carries out the reaction tRNA(Pro) + L-proline + ATP = L-prolyl-tRNA(Pro) + AMP + diphosphate. Functionally, catalyzes the attachment of proline to tRNA(Pro) in a two-step reaction: proline is first activated by ATP to form Pro-AMP and then transferred to the acceptor end of tRNA(Pro). As ProRS can inadvertently accommodate and process non-cognate amino acids such as alanine and cysteine, to avoid such errors it has two additional distinct editing activities against alanine. One activity is designated as 'pretransfer' editing and involves the tRNA(Pro)-independent hydrolysis of activated Ala-AMP. The other activity is designated 'posttransfer' editing and involves deacylation of mischarged Ala-tRNA(Pro). The misacylated Cys-tRNA(Pro) is not edited by ProRS. This chain is Proline--tRNA ligase, found in Staphylococcus aureus (strain USA300).